The following is a 166-amino-acid chain: Protein BioX (166 aa).

Helical transmembrane passes span 12–32, 33–53, 55–75, 87–107, and 117–137; these read ISLLACLIIVTGMFKIPTGIP, GSEFQLSAPIAVAIAAVFGFK, YFLAGIIASLILFLLGIHSIL, VGLIIVLLGTSIPVLVVAGPI, and AFTLGTPFLPLFVLAIPGMVI.

It localises to the cell membrane. Functionally, does not seem to be a permease of pimelate. Its role in biotin synthesis is not clear. The polypeptide is Protein BioX (bioX) (Lysinibacillus sphaericus (Bacillus sphaericus)).